The primary structure comprises 119 residues: Thrombin-like enzyme TLBan (119 aa).

One can recognise a Peptidase S1 domain in the interval 1–112 (VIGGDECNIN…YLLWIQSIIA (112 aa)). Residues H40 and D59 each act as charge relay system in the active site. A disulfide bridge links C54 with C118.

In terms of assembly, monomer. Post-translationally, contains both N-linked carbohydrates and sialic acid. Expressed by the venom gland.

The protein localises to the secreted. With respect to regulation, strongly inhibited by PMSF and slightly inhibited by EDTA and soybean trypsin inhibitor. Thrombin-like snake venom serine protease, with high clotting activity in vitro. Also has fibrinogenolytic ability, showing a fast degradation of fibrinogen Aalpha chain (FGA), a slow degradation of Bbeta chain (FGB) and no degradation of gamma chain. Also causes platelet aggregation in platelet rich plasma (PRP) and washed platelet suspension. This chain is Thrombin-like enzyme TLBan, found in Bothrocophias andianus (Andean lancehead).